A 220-amino-acid chain; its full sequence is MMSDPNNAPQDHDSGIVLASASPRRSQLLAGVGIAFDVVPSDAPEESVPEETPQQHAIRLSLLKAREVANRPEVKGRWFIGSDTIVVRDATILGKPRDARDAADMLGSLSGRSHCVISGYAVLDRITGKEVADAVTTVVRFRKLTDEEIQGYIATGEPFGKAGAYAIQGIGACMIPAIEGSYTNVVGLPLCEVVETLERLGAVRLFASDRPLCAHLDPPA.

D83 acts as the Proton acceptor in catalysis.

The protein belongs to the Maf family. YhdE subfamily. A divalent metal cation is required as a cofactor.

It localises to the cytoplasm. It carries out the reaction dTTP + H2O = dTMP + diphosphate + H(+). The catalysed reaction is UTP + H2O = UMP + diphosphate + H(+). Its function is as follows. Nucleoside triphosphate pyrophosphatase that hydrolyzes dTTP and UTP. May have a dual role in cell division arrest and in preventing the incorporation of modified nucleotides into cellular nucleic acids. The polypeptide is dTTP/UTP pyrophosphatase (Syntrophotalea carbinolica (strain DSM 2380 / NBRC 103641 / GraBd1) (Pelobacter carbinolicus)).